A 183-amino-acid polypeptide reads, in one-letter code: Threonylcarbamoyl-AMP synthase (183 aa).

In terms of domain architecture, YrdC-like spans 1 to 183 (MELAQIVERL…IFSRQIFRRG (183 aa)).

This sequence belongs to the SUA5 family. TsaC subfamily.

The protein localises to the cytoplasm. It carries out the reaction L-threonine + hydrogencarbonate + ATP = L-threonylcarbamoyladenylate + diphosphate + H2O. Functionally, required for the formation of a threonylcarbamoyl group on adenosine at position 37 (t(6)A37) in tRNAs that read codons beginning with adenine. Catalyzes the conversion of L-threonine, HCO(3)(-)/CO(2) and ATP to give threonylcarbamoyl-AMP (TC-AMP) as the acyladenylate intermediate, with the release of diphosphate. This is Threonylcarbamoyl-AMP synthase from Mannheimia succiniciproducens (strain KCTC 0769BP / MBEL55E).